A 715-amino-acid chain; its full sequence is Serine/arginine repetitive matrix protein 5 (715 aa).

Positions 1–13 (MSSPKRSSKPSMS) are enriched in low complexity. Positions 1–715 (MSSPKRSSKP…RSSSSSSKLA (715 aa)) are disordered. A compositionally biased stretch (polar residues) spans 32 to 59 (LKSTKSATPNRSLVPTKPATSRNSVMSP). The span at 60–79 (SSSKSTKSTSTKRAPSNRPS) shows a compositional bias: low complexity. Residues 80-90 (SRSRVRSKART) show a composition bias toward basic residues. Polar residues predominate over residues 92–104 (SRVSTDTRTSKAS). Residues 112–136 (HQRRGTHSRGRTPGRRGSRSSKRSP) are compositionally biased toward basic residues. Composition is skewed to polar residues over residues 213–224 (TPSTAKCQTPTG) and 257–272 (YSPT…YNQA). Over residues 273–285 (STRSRPQSHSQSR) the composition is skewed to low complexity. Positions 286–320 (SPRRSRSGSQKRTHSRVRSHSWKRNHSRARSRTRK) are enriched in basic residues. Basic and acidic residues-rich tracts occupy residues 359 to 388 (PSKE…KESG) and 397 to 521 (KQRD…ERDH). Positions 522-536 (RRSRSPSKERQRRQS) are enriched in basic residues. Composition is skewed to basic and acidic residues over residues 539–595 (PNKE…DHSR) and 611–628 (SSKE…KEGN). Over residues 657-666 (TRTSSLSQNR) the composition is skewed to polar residues. Residues 667-681 (TPSKTSSHSPSTFPS) show a composition bias toward low complexity. Residues 682 to 715 (GGQTLSQDDSQADATTSKATLPGERSSSSSSKLA) are compositionally biased toward polar residues.

This Homo sapiens (Human) protein is Serine/arginine repetitive matrix protein 5 (SRRM5).